The chain runs to 381 residues: L-lactate dehydrogenase (381 aa).

Residues 1 to 380 (MIISASTDYR…NRDSLAVSER (380 aa)) form the FMN hydroxy acid dehydrogenase domain. Y24 provides a ligand contact to substrate. Positions 106 and 127 each coordinate FMN. Y129 provides a ligand contact to substrate. T155 contacts FMN. R164 serves as a coordination point for substrate. FMN is bound at residue K251. H275 (proton acceptor) is an active-site residue. Residue R278 participates in substrate binding. Residue 306-330 (DSGIRTGLDVVRMIALGADSVLLGR) coordinates FMN.

Belongs to the FMN-dependent alpha-hydroxy acid dehydrogenase family. Requires FMN as cofactor.

The protein localises to the cell inner membrane. The catalysed reaction is (S)-lactate + A = pyruvate + AH2. Catalyzes the conversion of L-lactate to pyruvate. Is coupled to the respiratory chain. In Yersinia pseudotuberculosis serotype O:1b (strain IP 31758), this protein is L-lactate dehydrogenase.